The primary structure comprises 267 residues: Phosphonoacetaldehyde hydrolase (267 aa).

The active-site Nucleophile is Asp-10. 2 residues coordinate Mg(2+): Asp-10 and Ala-12. Lys-51 (schiff-base intermediate with substrate) is an active-site residue. Asp-184 contributes to the Mg(2+) binding site.

Belongs to the HAD-like hydrolase superfamily. PhnX family. Homodimer. It depends on Mg(2+) as a cofactor.

The enzyme catalyses phosphonoacetaldehyde + H2O = acetaldehyde + phosphate + H(+). Involved in phosphonate degradation. In Paraburkholderia phytofirmans (strain DSM 17436 / LMG 22146 / PsJN) (Burkholderia phytofirmans), this protein is Phosphonoacetaldehyde hydrolase.